The primary structure comprises 419 residues: Elongation factor Tu, chloroplastic (419 aa).

Residues 10–214 (KPHVNIGTIG…TVDEHIPTPK (205 aa)) enclose the tr-type G domain. The tract at residues 19–26 (GHVDHGKT) is G1. 19-26 (GHVDHGKT) is a GTP binding site. Residue T26 coordinates Mg(2+). The G2 stretch occupies residues 60–64 (GITIN). The segment at 81–84 (DCPG) is G3. Residues 81-85 (DCPGH) and 136-139 (NKAD) each bind GTP. The tract at residues 136–139 (NKAD) is G4. The interval 174 to 176 (SAL) is G5.

It belongs to the TRAFAC class translation factor GTPase superfamily. Classic translation factor GTPase family. EF-Tu/EF-1A subfamily.

Its subcellular location is the plastid. It is found in the chloroplast. The catalysed reaction is GTP + H2O = GDP + phosphate + H(+). GTP hydrolase that promotes the GTP-dependent binding of aminoacyl-tRNA to the A-site of ribosomes during protein biosynthesis. The sequence is that of Elongation factor Tu, chloroplastic (tufA) from Stigeoclonium helveticum (Green alga).